The primary structure comprises 282 residues: Acetylglutamate kinase (282 aa).

Substrate contacts are provided by residues 62-63 (GG), R84, and N178.

This sequence belongs to the acetylglutamate kinase family. ArgB subfamily.

It is found in the cytoplasm. The catalysed reaction is N-acetyl-L-glutamate + ATP = N-acetyl-L-glutamyl 5-phosphate + ADP. Its pathway is amino-acid biosynthesis; L-arginine biosynthesis; N(2)-acetyl-L-ornithine from L-glutamate: step 2/4. In terms of biological role, catalyzes the ATP-dependent phosphorylation of N-acetyl-L-glutamate. This chain is Acetylglutamate kinase, found in Thermotoga petrophila (strain ATCC BAA-488 / DSM 13995 / JCM 10881 / RKU-1).